Reading from the N-terminus, the 179-residue chain is Inner membrane-spanning protein YciB (179 aa).

5 helical membrane-spanning segments follow: residues 22 to 42 (IYAATTALIVATAIVLIYTWI), 50 to 70 (MALITFVLVAVFGGLTVFFHN), 76 to 96 (WKVTVIYGLFAGALLFSQWVM), 121 to 141 (IAWAVFFILCGLANIYIAFWM), and 149 to 169 (FKVFGLTALTLIFTLLSGVYI).

Belongs to the YciB family.

It is found in the cell inner membrane. In terms of biological role, plays a role in cell envelope biogenesis, maintenance of cell envelope integrity and membrane homeostasis. In Enterobacter sp. (strain 638), this protein is Inner membrane-spanning protein YciB.